We begin with the raw amino-acid sequence, 972 residues long: C-1-tetrahydrofolate synthase, mitochondrial (972 aa).

A mitochondrion-targeting transit peptide spans 1–55 (MNVMVSFNQLRNYFLESNSLRPSKWLFQSYGTSSSANILNGKLLARKLQRSVAEE). The interval 56–340 (VQALKAKDRN…DLNPLELKKP (285 aa)) is methylenetetrahydrofolate dehydrogenase and cyclohydrolase. Residues 84-88 (YVRMK) and 131-133 (VQL) contribute to the substrate site. NADP(+) is bound by residues 202-204 (GRS) and Ser-227. Residue 299 to 303 (PGGVG) coordinates substrate. The interval 341–972 (VPSDIEIANS…CENGEIVGLS (632 aa)) is formyltetrahydrofolate synthetase. 405–412 (TPFGEGKS) lines the ATP pocket.

This sequence in the N-terminal section; belongs to the tetrahydrofolate dehydrogenase/cyclohydrolase family. It in the C-terminal section; belongs to the formate--tetrahydrofolate ligase family. As to quaternary structure, homodimer.

The protein localises to the mitochondrion. The enzyme catalyses (6R)-5,10-methylene-5,6,7,8-tetrahydrofolate + NADP(+) = (6R)-5,10-methenyltetrahydrofolate + NADPH. The catalysed reaction is (6R)-5,10-methenyltetrahydrofolate + H2O = (6R)-10-formyltetrahydrofolate + H(+). It carries out the reaction (6S)-5,6,7,8-tetrahydrofolate + formate + ATP = (6R)-10-formyltetrahydrofolate + ADP + phosphate. The protein operates within one-carbon metabolism; tetrahydrofolate interconversion. In terms of biological role, mitochondrial isozyme of C-1-tetrahydrofolate synthase. The trifunctional enzyme catalyzes the interconversion of the one-carbon derivatives of tetrahydrofolate (THF) between different oxidation states by the enzymatic activities 10-formyltetrahydrofolate synthetase, 5,lO-methenyltetrahydrofolate cyclohydrolase, and 5,lO-methylenetetrahydrofolate dehydrogenase. In Schizosaccharomyces pombe (strain 972 / ATCC 24843) (Fission yeast), this protein is C-1-tetrahydrofolate synthase, mitochondrial (ade9).